The primary structure comprises 313 residues: N-acetyl-gamma-glutamyl-phosphate reductase (313 aa).

The active site involves cysteine 117.

It belongs to the NAGSA dehydrogenase family. Type 2 subfamily.

It localises to the cytoplasm. The catalysed reaction is N-acetyl-L-glutamate 5-semialdehyde + phosphate + NADP(+) = N-acetyl-L-glutamyl 5-phosphate + NADPH + H(+). The protein operates within amino-acid biosynthesis; L-arginine biosynthesis; N(2)-acetyl-L-ornithine from L-glutamate: step 3/4. In terms of biological role, catalyzes the NADPH-dependent reduction of N-acetyl-5-glutamyl phosphate to yield N-acetyl-L-glutamate 5-semialdehyde. This Burkholderia cenocepacia (strain ATCC BAA-245 / DSM 16553 / LMG 16656 / NCTC 13227 / J2315 / CF5610) (Burkholderia cepacia (strain J2315)) protein is N-acetyl-gamma-glutamyl-phosphate reductase.